The following is a 490-amino-acid chain: Probable malate:quinone oxidoreductase (490 aa).

Belongs to the MQO family. It depends on FAD as a cofactor.

The enzyme catalyses (S)-malate + a quinone = a quinol + oxaloacetate. Its pathway is carbohydrate metabolism; tricarboxylic acid cycle; oxaloacetate from (S)-malate (quinone route): step 1/1. In Corynebacterium jeikeium (strain K411), this protein is Probable malate:quinone oxidoreductase.